Here is a 114-residue protein sequence, read N- to C-terminus: Ribosome-binding factor A (114 aa).

Belongs to the RbfA family. In terms of assembly, monomer. Binds 30S ribosomal subunits, but not 50S ribosomal subunits or 70S ribosomes.

The protein localises to the cytoplasm. In terms of biological role, one of several proteins that assist in the late maturation steps of the functional core of the 30S ribosomal subunit. Associates with free 30S ribosomal subunits (but not with 30S subunits that are part of 70S ribosomes or polysomes). Required for efficient processing of 16S rRNA. May interact with the 5'-terminal helix region of 16S rRNA. This Listeria monocytogenes serotype 4b (strain F2365) protein is Ribosome-binding factor A.